We begin with the raw amino-acid sequence, 224 residues long: Ribonuclease 3 (224 aa).

The RNase III domain maps to 5–127 (ANRLQRRLGY…IIGAIYLDSD (123 aa)). Residue glutamate 40 coordinates Mg(2+). The active site involves aspartate 44. Residues aspartate 113 and glutamate 116 each coordinate Mg(2+). Glutamate 116 is an active-site residue. In terms of domain architecture, DRBM spans 154 to 224 (DPKTRLQECL…AELALKQLES (71 aa)).

It belongs to the ribonuclease III family. As to quaternary structure, homodimer. It depends on Mg(2+) as a cofactor.

The protein resides in the cytoplasm. It carries out the reaction Endonucleolytic cleavage to 5'-phosphomonoester.. In terms of biological role, digests double-stranded RNA. Involved in the processing of primary rRNA transcript to yield the immediate precursors to the large and small rRNAs (23S and 16S). Processes some mRNAs, and tRNAs when they are encoded in the rRNA operon. Processes pre-crRNA and tracrRNA of type II CRISPR loci if present in the organism. The sequence is that of Ribonuclease 3 from Photobacterium profundum (strain SS9).